The chain runs to 498 residues: MAKYVAAVDQGTTSTRCMIFDHAGRVVAVDQKEHTQIYPQPGWVEHDPLEIWTRTQEVIDGALRKSGVERSEIAAVGVTNQRETTVVWEKATGKPVYNAIVWQDTRTDQICNQLAQDGGQDRFRPKVGLPLATYFSGPKITWILDNVPGVREKAEQGEVLFGNIDTWLIWNMTGGVNGGVHITDVSNASRTMLMNLETLDWDDDILDVMRVPRAMLPKIMPSAAVYGAAVGALEGIPVAGDLGDQQAALFGQTCFSVGEAKNTYGTGCFMLLNTGLKPVPSQNGLLTTVGYKIGDQPTVYCLEGSIAITGALVQWLRDNLRFFDFSSHIEEYANAVEDSGGIYIVPAFSGLFAPYWKSNARGAIVGLTRYITKNHICRAALEATAYQTREVLDAMNKDSGVDLTALKVDGGMVFNNTLMQFQADILGVPVIRPTVSETTALGAAYAAGLAVGFWKEVEDLRANWGKDHEWSPQMDSATRERLYSGWKKAVTRTFDWVD.

Residue T12 coordinates ADP. T12, T13, and S14 together coordinate ATP. Sn-glycerol 3-phosphate is bound at residue T12. R16 is a binding site for ADP. R82, E83, Y134, and D244 together coordinate sn-glycerol 3-phosphate. R82, E83, Y134, D244, and Q245 together coordinate glycerol. ADP is bound by residues T266 and G310. ATP-binding residues include T266, G310, Q314, and G411. ADP contacts are provided by G411 and N415.

It belongs to the FGGY kinase family.

The enzyme catalyses glycerol + ATP = sn-glycerol 3-phosphate + ADP + H(+). Its pathway is polyol metabolism; glycerol degradation via glycerol kinase pathway; sn-glycerol 3-phosphate from glycerol: step 1/1. With respect to regulation, inhibited by fructose 1,6-bisphosphate (FBP). Key enzyme in the regulation of glycerol uptake and metabolism. Catalyzes the phosphorylation of glycerol to yield sn-glycerol 3-phosphate. The chain is Glycerol kinase from Roseiflexus sp. (strain RS-1).